A 393-amino-acid chain; its full sequence is NAD(P)H-quinone oxidoreductase subunit H, chloroplastic (393 aa).

Belongs to the complex I 49 kDa subunit family. NDH is composed of at least 16 different subunits, 5 of which are encoded in the nucleus.

The protein resides in the plastid. It localises to the chloroplast thylakoid membrane. It catalyses the reaction a plastoquinone + NADH + (n+1) H(+)(in) = a plastoquinol + NAD(+) + n H(+)(out). It carries out the reaction a plastoquinone + NADPH + (n+1) H(+)(in) = a plastoquinol + NADP(+) + n H(+)(out). Its function is as follows. NDH shuttles electrons from NAD(P)H:plastoquinone, via FMN and iron-sulfur (Fe-S) centers, to quinones in the photosynthetic chain and possibly in a chloroplast respiratory chain. The immediate electron acceptor for the enzyme in this species is believed to be plastoquinone. Couples the redox reaction to proton translocation, and thus conserves the redox energy in a proton gradient. This chain is NAD(P)H-quinone oxidoreductase subunit H, chloroplastic, found in Panax ginseng (Korean ginseng).